A 127-amino-acid chain; its full sequence is Small ribosomal subunit protein uS8m (127 aa).

The protein belongs to the universal ribosomal protein uS8 family.

Its subcellular location is the mitochondrion. This Acanthamoeba castellanii (Amoeba) protein is Small ribosomal subunit protein uS8m (RPS8).